Consider the following 235-residue polypeptide: Large ribosomal subunit protein uL1 (235 aa).

Belongs to the universal ribosomal protein uL1 family. Part of the 50S ribosomal subunit.

Functionally, binds directly to 23S rRNA. The L1 stalk is quite mobile in the ribosome, and is involved in E site tRNA release. In terms of biological role, protein L1 is also a translational repressor protein, it controls the translation of the L11 operon by binding to its mRNA. The sequence is that of Large ribosomal subunit protein uL1 from Mycobacterium marinum (strain ATCC BAA-535 / M).